We begin with the raw amino-acid sequence, 147 residues long: Hemoglobin subunit beta-1 (147 aa).

In terms of domain architecture, Globin spans 3–147 (HWTDFERSTI…VVFSLGKQYH (145 aa)). The heme b site is built by His64 and His93.

This sequence belongs to the globin family. As to quaternary structure, hb1 is a heterotetramer of two alpha-1 chains and two beta-1 chains. As to expression, red blood cells.

In terms of biological role, involved in oxygen transport from gills to the various peripheral tissues. In Liparis tunicatus (Kelp snailfish), this protein is Hemoglobin subunit beta-1.